A 190-amino-acid polypeptide reads, in one-letter code: Potassium-transporting ATPase KdpC subunit (190 aa).

Residues 10-30 (TFIFLLLITGGVYPLLTTALG) traverse the membrane as a helical segment.

The protein belongs to the KdpC family. As to quaternary structure, the system is composed of three essential subunits: KdpA, KdpB and KdpC.

Its subcellular location is the cell inner membrane. In terms of biological role, part of the high-affinity ATP-driven potassium transport (or Kdp) system, which catalyzes the hydrolysis of ATP coupled with the electrogenic transport of potassium into the cytoplasm. This subunit acts as a catalytic chaperone that increases the ATP-binding affinity of the ATP-hydrolyzing subunit KdpB by the formation of a transient KdpB/KdpC/ATP ternary complex. The sequence is that of Potassium-transporting ATPase KdpC subunit from Escherichia coli O157:H7.